The following is a 1953-amino-acid chain: TATA-binding protein-associated factor mot1 (1953 aa).

Residues 36-74 form an HEAT 1 repeat; sequence PDELYNLLGRVVPYLKSKNWDTRVAAAKAIGGIVENVPV. Residues 79–141 form a disordered region; sequence RTSPVKKEET…KLEEERLSTR (63 aa). Residues 98-108 are compositionally biased toward basic and acidic residues; that stretch reads TEEKPFIKTEE. Residues 113–130 show a composition bias toward low complexity; it reads SSQSQVVVSSNLTSNSEV. Basic and acidic residues predominate over residues 131-141; the sequence is SKLEEERLSTR. Phosphoserine is present on Ser-144. Positions 240–278 are disordered; it reads DNVGSNSKGSPTTSIPEHKTSINNNKPEDTPTPSENVHL. A compositionally biased stretch (polar residues) spans 242 to 276; it reads VGSNSKGSPTTSIPEHKTSINNNKPEDTPTPSENV. 4 HEAT repeats span residues 358–396, 513–551, 554–592, and 608–646; these read VWPFETLVELLLIDMFDPSWEIRHGACMGLREIIRYAGF, SDYLDSLINTVIHGLANHDDDVRAVSALTLLPIADKLVQ, LSSCKNLLKVLWDCLDDVKDDLSSSTSCVMDLLSSLCSF, and EFSFETLVPRLFHLMRYTLTGVRRSVVYALTKFISVQTS. Disordered regions lie at residues 730 to 762 and 1078 to 1103; these read SGQPYAPSTSRERNNNISELSNSRTKHRAKDDP and DDNDEQVSGKLVDDSDDVSNDRKSSL. HEAT repeat units follow at residues 1191–1229 and 1270–1311; these read QSEIVSTLPHLLATLQSNYSAVRNMASKCFAAITESNAA and VRIL…LVPL. The 174-residue stretch at 1370–1543 folds into the Helicase ATP-binding domain; it reads AFLNKYELHG…WSLFDFLMPG (174 aa). Residue 1383–1390 participates in ATP binding; that stretch reads DDMGLGKT. Positions 1494–1497 match the DEGH box motif; it reads DEGH. An HEAT 8 repeat occupies 1580–1623; that stretch reads EAIHKQVLPFMLRRLKEDVLADLPPKIIQDYYCDMSDLQRKLLN. A Helicase C-terminal domain is found at 1725–1877; the sequence is GIDSALTNAV…STVVNQQNAG (153 aa). Residues 1901-1920 form a disordered region; that stretch reads QNIDKEESEDAAGRGLSGTS.

The protein belongs to the SNF2/RAD54 helicase family. As to quaternary structure, forms a complex with TBP which binds TATA DNA.

Its subcellular location is the nucleus. In terms of biological role, regulates transcription in association with TATA binding protein (TBP). Removes TBP from the TATA box via its ATPase activity. The sequence is that of TATA-binding protein-associated factor mot1 from Schizosaccharomyces pombe (strain 972 / ATCC 24843) (Fission yeast).